Here is a 179-residue protein sequence, read N- to C-terminus: ATP synthase subunit b, chloroplastic (179 aa).

A helical membrane pass occupies residues 35 to 51 (IVILGGGIFKLGSTALS).

The protein belongs to the ATPase B chain family. In terms of assembly, F-type ATPases have 2 components, F(1) - the catalytic core - and F(0) - the membrane proton channel. F(1) has five subunits: alpha(3), beta(3), gamma(1), delta(1), epsilon(1). F(0) has four main subunits: a(1), b(1), b'(1) and c(10-14). The alpha and beta chains form an alternating ring which encloses part of the gamma chain. F(1) is attached to F(0) by a central stalk formed by the gamma and epsilon chains, while a peripheral stalk is formed by the delta, b and b' chains.

The protein resides in the plastid. It localises to the chloroplast thylakoid membrane. Its function is as follows. F(1)F(0) ATP synthase produces ATP from ADP in the presence of a proton or sodium gradient. F-type ATPases consist of two structural domains, F(1) containing the extramembraneous catalytic core and F(0) containing the membrane proton channel, linked together by a central stalk and a peripheral stalk. During catalysis, ATP synthesis in the catalytic domain of F(1) is coupled via a rotary mechanism of the central stalk subunits to proton translocation. In terms of biological role, component of the F(0) channel, it forms part of the peripheral stalk, linking F(1) to F(0). The protein is ATP synthase subunit b, chloroplastic of Emiliania huxleyi (Coccolithophore).